The sequence spans 413 residues: ATP-dependent RNA helicase RhlB (413 aa).

The short motif at 9-37 is the Q motif element; it reads QRFADLPLHPQILAALNDQNFEYCTPIQA. The 178-residue stretch at 40–217 folds into the Helicase ATP-binding domain; the sequence is LPLTLQGKDV…FEDMNDPEYI (178 aa). 53–60 serves as a coordination point for ATP; it reads AQTGTGKT. Positions 163–166 match the DEAD box motif; that stretch reads DEAD. A Helicase C-terminal domain is found at 241 to 388; that stretch reads KMALLMTLLE…VSQYDPDSLI (148 aa).

It belongs to the DEAD box helicase family. RhlB subfamily. As to quaternary structure, component of the RNA degradosome, which is a multiprotein complex involved in RNA processing and mRNA degradation.

It localises to the cytoplasm. The catalysed reaction is ATP + H2O = ADP + phosphate + H(+). In terms of biological role, DEAD-box RNA helicase involved in RNA degradation. Has RNA-dependent ATPase activity and unwinds double-stranded RNA. This chain is ATP-dependent RNA helicase RhlB, found in Actinobacillus succinogenes (strain ATCC 55618 / DSM 22257 / CCUG 43843 / 130Z).